The following is a 143-amino-acid chain: MAKKVSAYIKLQVGAGKANPSPPVGPALGQHGVNIMEFCKAFNAQTQEMEAGLPVPVVITVYNDRSFTFITKTPPAAVLLRKAAGIQKGSGEPNTKKVGTVTREQLEEIAKTKEPDLNAADLDAAVRSIAGTARSMGLDVEGL.

Belongs to the universal ribosomal protein uL11 family. Part of the ribosomal stalk of the 50S ribosomal subunit. Interacts with L10 and the large rRNA to form the base of the stalk. L10 forms an elongated spine to which L12 dimers bind in a sequential fashion forming a multimeric L10(L12)X complex. In terms of processing, one or more lysine residues are methylated.

Forms part of the ribosomal stalk which helps the ribosome interact with GTP-bound translation factors. The sequence is that of Large ribosomal subunit protein uL11 from Alkalilimnicola ehrlichii (strain ATCC BAA-1101 / DSM 17681 / MLHE-1).